We begin with the raw amino-acid sequence, 378 residues long: Ribosomal RNA large subunit methyltransferase G (378 aa).

It belongs to the methyltransferase superfamily. RlmG family.

Its subcellular location is the cytoplasm. The enzyme catalyses guanosine(1835) in 23S rRNA + S-adenosyl-L-methionine = N(2)-methylguanosine(1835) in 23S rRNA + S-adenosyl-L-homocysteine + H(+). Functionally, specifically methylates the guanine in position 1835 (m2G1835) of 23S rRNA. This Salmonella heidelberg (strain SL476) protein is Ribosomal RNA large subunit methyltransferase G.